The primary structure comprises 222 residues: Protein SHI RELATED SEQUENCE 4 (222 aa).

Residues cysteine 72, cysteine 75, cysteine 83, cysteine 88, cysteine 92, and cysteine 99 each coordinate Zn(2+). A DNA-binding region (zn(2)-C6 fungal-type; degenerate) is located at residues 72 to 99 (CQECGNQAKKGCTHGRCRTCCKSNGLHC). The segment at 114-137 (RERQQQLQTPTSNPTGGSGRVGKY) is disordered. Polar residues predominate over residues 118-128 (QQLQTPTSNPT). A Required for homo- and heterodimerization motif is present at residues 191 to 194 (IAGH).

Belongs to the SHI protein family. As to expression, expressed in cotyledon tips, leaf primordia, hydathodes, stipules, and lateral root primordia and weakly at the edges of petals and sepals.

The protein localises to the nucleus. Its function is as follows. Transcription activator that binds DNA on 5'-ACTCTAC-3' and promotes auxin homeostasis-regulating gene expression (e.g. YUC genes), as well as genes affecting stamen development, cell expansion and timing of flowering. Synergistically with other SHI-related proteins, regulates gynoecium, stamen and leaf development in a dose-dependent manner, controlling apical-basal patterning. Promotes style and stigma formation, and influences vascular development during gynoecium development. May also have a role in the formation and/or maintenance of the shoot apical meristem (SAM). This is Protein SHI RELATED SEQUENCE 4 (SRS4) from Arabidopsis thaliana (Mouse-ear cress).